The sequence spans 275 residues: Undecaprenyl-diphosphatase (275 aa).

7 consecutive transmembrane segments (helical) span residues 1-21 (MTTF…FLPV), 41-61 (ILFL…FVYA), 95-115 (LLII…KDLF), 118-138 (FYNS…LLWT), 192-212 (ATKF…VFEV), 223-243 (FTLT…VFAI), and 255-275 (LYYF…FSLL).

It belongs to the UppP family.

The protein resides in the cell membrane. It catalyses the reaction di-trans,octa-cis-undecaprenyl diphosphate + H2O = di-trans,octa-cis-undecaprenyl phosphate + phosphate + H(+). Functionally, catalyzes the dephosphorylation of undecaprenyl diphosphate (UPP). Confers resistance to bacitracin. This is Undecaprenyl-diphosphatase from Alkaliphilus metalliredigens (strain QYMF).